Consider the following 22-residue polypeptide: Rothein 4.1 (22 aa).

It belongs to the frog skin active peptide (FSAP) family. Rothein subfamily. In terms of tissue distribution, expressed by the skin dorsal glands.

It is found in the secreted. Lacks antimicrobial activity. Does not inhibit the formation of NO by neuronal nitric oxide. In Litoria rothii (Roth's tree frog), this protein is Rothein 4.1.